We begin with the raw amino-acid sequence, 84 residues long: Beta-mammal/insect toxin Ts1 (84 aa).

The signal sequence occupies residues 1–20; that stretch reads MKGMILFISCLLLIGIVVEC. Positions 21–82 constitute an LCN-type CS-alpha/beta domain; it reads KEGYLMDHEG…VWDRATNKCG (62 aa). 4 disulfides stabilise this stretch: cysteine 31/cysteine 81, cysteine 35/cysteine 57, cysteine 43/cysteine 62, and cysteine 47/cysteine 64. At cysteine 81 the chain carries Cysteine amide.

This sequence belongs to the long (4 C-C) scorpion toxin superfamily. Sodium channel inhibitor family. Post-translationally, C-terminal amidation is important for high activity. As to expression, expressed by the venom gland.

Its subcellular location is the secreted. Its function is as follows. Voltage-gated sodium channels (Nav) gating-modifier. Acts both as alpha- and beta-toxin, since it affects not only activation but also inactivation of Nav channels. Binds to Nav domain DII and impairs the four Nav channel voltage sensors movements. Depending on Nav channel subtypes tested, can also bind Nav domains DIII (low affinity) and DIV (very low affinity). Acts on almost all the Nav channels tested (mammalian Nav1.2/SCN2A, Nav1.3/SCN3A, Nav1.4/SCN4A, Nav1.5/SCN5A, Nav1.6/SCN8A, Nav1.9/SCN11A, and insect DmNav1). Is highly active against both mammals and insects. Irreversibly modulates DmNav channels. Other Ts1 activities have been studied, such as immunomodulation, antimicrobial activity or exocrine secretion. This toxin exhibits an antifungal activity against filamentous fungi. In vitro, it has an important immunomodulatory effect on macrophages by stimulating the release of pro-inflammatory cytokines. It also shows an activity in exocrine secretion in pancreas, stomach and adrenal gland. This Tityus serrulatus (Brazilian scorpion) protein is Beta-mammal/insect toxin Ts1.